The primary structure comprises 372 residues: Tyrosine--tRNA ligase 1 (372 aa).

L-tyrosine contacts are provided by Tyr37, Tyr169, Gln173, Asp176, and Gln191. The 'KMSKS' region signature appears at 246–250 (KMSKS). Residue Lys249 coordinates ATP.

This sequence belongs to the class-I aminoacyl-tRNA synthetase family. TyrS type 4 subfamily. In terms of assembly, homodimer.

Its subcellular location is the cytoplasm. It carries out the reaction tRNA(Tyr) + L-tyrosine + ATP = L-tyrosyl-tRNA(Tyr) + AMP + diphosphate + H(+). Its function is as follows. Catalyzes the attachment of tyrosine to tRNA(Tyr) in a two-step reaction: tyrosine is first activated by ATP to form Tyr-AMP and then transferred to the acceptor end of tRNA(Tyr). The sequence is that of Tyrosine--tRNA ligase 1 from Pyrobaculum aerophilum (strain ATCC 51768 / DSM 7523 / JCM 9630 / CIP 104966 / NBRC 100827 / IM2).